Here is a 613-residue protein sequence, read N- to C-terminus: Potassium voltage-gated channel subfamily A member 5 (613 aa).

The tract at residues 1 to 108 is disordered; that stretch reads MEIALVPLEN…EGDPGLGTVE (108 aa). The tract at residues 1-211 is tetramerization domain; it reads MEIALVPLEN…FYQLGDEAME (211 aa). Residues 1–247 are Cytoplasmic-facing; sequence MEIALVPLEN…LIFEYPESSG (247 aa). A compositionally biased stretch (basic and acidic residues) spans 45-62; sequence GPKEPAPKGRGAQRDADS. A run of 2 repeats spans residues 61-71 and 72-82. The interval 61–82 is 2 X 11 AA tandem repeat of D-[SP]-G-V-R-P-L-P-P-L-P; sequence DSGVRPLPPLPDPGVRPLPPLP. Residues 66 to 83 show a composition bias toward pro residues; sequence PLPPLPDPGVRPLPPLPE. Basic and acidic residues predominate over residues 84-93; that stretch reads ELPRPRRPPP. Residue Lys-221 forms a Glycyl lysine isopeptide (Lys-Gly) (interchain with G-Cter in SUMO) linkage. Residues 248–269 form a helical membrane-spanning segment; that stretch reads SARAIAIVSVLVILISIITFCL. Topologically, residues 270 to 323 are extracellular; sequence ETLPEFRDERELLRHPPAPHQPPAPAPGANGSGVMAPPSGPTVAPLLPRTLADP. The disordered stretch occupies residues 282-304; that stretch reads LRHPPAPHQPPAPAPGANGSGVM. Positions 285 to 295 are enriched in pro residues; it reads PPAPHQPPAPA. The helical transmembrane segment at 324–345 threads the bilayer; sequence FFIVETTCVIWFTFELLVRFFA. Cys-346 is lipidated: S-palmitoyl cysteine. Residues 346-356 are Cytoplasmic-facing; the sequence is CPSKAGFSRNI. A helical membrane pass occupies residues 357 to 377; that stretch reads MNIIDVVAIFPYFITLGTELA. At 378-395 the chain is on the extracellular side; the sequence is EQQPGGGGGGQNGQQAMS. A helical; Voltage-sensor membrane pass occupies residues 396 to 416; it reads LAILRVIRLVRVFRIFKLSRH. The Cytoplasmic segment spans residues 417–431; the sequence is SKGLQILGKTLQASM. The segment at 418-431 is S4-S5 linker; the sequence is KGLQILGKTLQASM. The helical transmembrane segment at 432 to 453 threads the bilayer; that stretch reads RELGLLIFFLFIGVILFSSAVY. At 454–467 the chain is on the extracellular side; that stretch reads FAEADNQGTHFSSI. The helical intramembrane region spans 468 to 479; sequence PDAFWWAVVTMT. The Selectivity filter signature appears at 480–485; it reads TVGYGD. The stretch at 480-487 is an intramembrane region; the sequence is TVGYGDMR. At 488-494 the chain is on the extracellular side; the sequence is PITVGGK. The chain crosses the membrane as a helical span at residues 495–523; that stretch reads IVGSLCAIAGVLTIALPVPVIVSNFNYFY. The Cytoplasmic portion of the chain corresponds to 524–613; it reads HRETDHEEPA…CLDTSRETDL (90 aa). The interval 532–559 is disordered; sequence PAVLKEEQGTQSQGPGLDRGVQRKVSGS. Lys-536 is covalently cross-linked (Glycyl lysine isopeptide (Lys-Gly) (interchain with G-Cter in SUMO)). At Ser-557 the chain carries Phosphoserine; by PKA. The short motif at 611–613 is the PDZ-binding element; the sequence is TDL.

The protein belongs to the potassium channel family. A (Shaker) (TC 1.A.1.2) subfamily. Kv1.5/KCNA5 sub-subfamily. Homotetramer and heterotetramer of potassium channel proteins. Interacts with DLG1, which enhances channel currents. Forms a ternary complex with DLG1 and CAV3. Interacts with KCNAB1. Interacts with UBE2I. Interacts with XIRP2; the interaction is required for normal action potential configuration in the heart. Post-translationally, glycosylated. In terms of processing, sumoylated on Lys-221, and Lys-536, preferentially with SUMO3. Sumoylation regulates the voltage sensitivity of the channel. Pancreatic islets and insulinoma.

The protein localises to the cell membrane. The enzyme catalyses K(+)(in) = K(+)(out). Inhibited by 4-aminopyridine, nicotine, bepridil, correolide, and endothelin-1. Its function is as follows. Voltage-gated potassium channel that mediates transmembrane potassium transport in excitable membranes. Forms tetrameric potassium-selective channels through which potassium ions pass in accordance with their electrochemical gradient. The channel alternates between opened and closed conformations in response to the voltage difference across the membrane. Can form functional homotetrameric channels and heterotetrameric channels that contain variable proportions of KCNA1, KCNA2, KCNA4, KCNA5, and possibly other family members as well; channel properties depend on the type of alpha subunits that are part of the channel. Channel properties are modulated by cytoplasmic beta subunits that regulate the subcellular location of the alpha subunits and promote rapid inactivation. Homotetrameric channels display rapid activation and slow inactivation. Required for normal electrical conduction including formation of the infranodal ventricular conduction system and normal action potential configuration, as a result of its interaction with XIRP2. May play a role in regulating the secretion of insulin in normal pancreatic islets. Functionally, exhibits a faster depolarization rate, reduced voltage-dependent recovery from inactivation and an excessive cumulative inactivation. The chain is Potassium voltage-gated channel subfamily A member 5 (KCNA5) from Homo sapiens (Human).